The chain runs to 344 residues: Uroporphyrinogen decarboxylase (344 aa).

Substrate contacts are provided by residues 24–28 (RQAGR), Phe43, Asp74, Tyr151, Ser206, and His323.

Belongs to the uroporphyrinogen decarboxylase family. As to quaternary structure, homodimer.

The protein resides in the cytoplasm. The catalysed reaction is uroporphyrinogen III + 4 H(+) = coproporphyrinogen III + 4 CO2. It functions in the pathway porphyrin-containing compound metabolism; protoporphyrin-IX biosynthesis; coproporphyrinogen-III from 5-aminolevulinate: step 4/4. Functionally, catalyzes the decarboxylation of four acetate groups of uroporphyrinogen-III to yield coproporphyrinogen-III. The sequence is that of Uroporphyrinogen decarboxylase from Rhodobacter capsulatus (Rhodopseudomonas capsulata).